The sequence spans 209 residues: Protease (209 aa).

Catalysis depends on residues histidine 60, aspartate 77, and cysteine 127.

This sequence belongs to the peptidase C5 family. As to quaternary structure, interacts with protease cofactor pVI-C; this interaction is necessary for protease activation.

The protein resides in the virion. The protein localises to the host nucleus. The enzyme catalyses Cleaves proteins of the adenovirus and its host cell at two consensus sites: -Yaa-Xaa-Gly-Gly-|-Xaa- and -Yaa-Xaa-Gly-Xaa-|-Gly- (in which Yaa is Met, Ile or Leu, and Xaa is any amino acid).. With respect to regulation, requires DNA and protease cofactor for maximal activation. Inside nascent virions, becomes partially activated by binding to the viral DNA, allowing it to cleave the cofactor that binds to the protease and fully activates it. Actin, like the viral protease cofactor, seems to act as a cofactor in the cleavage of cytokeratin 18 and of actin itself. In terms of biological role, cleaves viral precursor proteins (pTP, pIIIa, pVI, pVII, pVIII, and pX) inside newly assembled particles giving rise to mature virions. Protease complexed to its cofactor slides along the viral DNA to specifically locate and cleave the viral precursors. Mature virions have a weakened organization compared to the unmature virions, thereby facilitating subsequent uncoating. Without maturation, the particle lacks infectivity and is unable to uncoat. Late in adenovirus infection, in the cytoplasm, may participate in the cytoskeleton destruction. Cleaves host cell cytoskeletal keratins K7 and K18. In Homo sapiens (Human), this protein is Protease.